The sequence spans 362 residues: Class I histocompatibility antigen, Gogo-B*0102 alpha chain (362 aa).

An N-terminal signal peptide occupies residues 1–24 (MRVTAPRTLLLLLSAALALTETWA). The tract at residues 25 to 114 (GSHSMRYFDT…ALRYYNQSEA (90 aa)) is alpha-1. Over 25-308 (GSHSMRYFDT…EPSSQSTIPI (284 aa)) the chain is Extracellular. An N-linked (GlcNAc...) asparagine glycan is attached at Asn-110. The tract at residues 115-206 (GSHTFQRMFG…ENGRETLQRA (92 aa)) is alpha-2. Intrachain disulfides connect Cys-125-Cys-188 and Cys-227-Cys-283. Residues 207–298 (DTPKTHVTHH…GLPKPLTLRW (92 aa)) are alpha-3. Positions 209 to 295 (PKTHVTHHPI…QHEGLPKPLT (87 aa)) constitute an Ig-like C1-type domain. A connecting peptide region spans residues 299–308 (EPSSQSTIPI). Residues 309–332 (VGIVAGLAVLAVVVIGAVVTAVIC) form a helical membrane-spanning segment. Residues 333–362 (RRKSSGGKGGSYSQAASSDSAQGSDVSLTA) are Cytoplasmic-facing. The interval 335-362 (KSSGGKGGSYSQAASSDSAQGSDVSLTA) is disordered. Positions 343–362 (SYSQAASSDSAQGSDVSLTA) are enriched in low complexity.

The protein belongs to the MHC class I family. Heterodimer of an alpha chain and a beta chain (beta-2-microglobulin).

The protein resides in the membrane. In terms of biological role, involved in the presentation of foreign antigens to the immune system. The polypeptide is Class I histocompatibility antigen, Gogo-B*0102 alpha chain (Gorilla gorilla gorilla (Western lowland gorilla)).